Consider the following 276-residue polypeptide: Putative oxidoreductase SadH (276 aa).

Residue Ser142 participates in substrate binding. The active-site Proton acceptor is the Tyr155.

It belongs to the short-chain dehydrogenases/reductases (SDR) family.

Its function is as follows. Required for maintaining the appropriate mycolic acid composition and permeability of the envelope on its exposure to acidic pH. This Mycobacterium tuberculosis (strain CDC 1551 / Oshkosh) protein is Putative oxidoreductase SadH (sadH).